A 150-amino-acid chain; its full sequence is Ribonuclease K6 (150 aa).

A signal peptide spans 1-23 (MVLCFPLLLLLLVLWGQVCPLHA). The active-site Proton acceptor is the histidine 38. 4 cysteine pairs are disulfide-bonded: cysteine 46–cysteine 104, cysteine 60–cysteine 114, cysteine 78–cysteine 129, and cysteine 85–cysteine 92. Asparagine 55 is a glycosylation site (N-linked (GlcNAc...) asparagine). Substrate contacts are provided by residues 61-65 (KPQNT) and lysine 86. Asparagine 100 carries N-linked (GlcNAc...) asparagine glycosylation. Arginine 105 contacts substrate. The active-site Proton donor is the histidine 145.

This sequence belongs to the pancreatic ribonuclease family. Interacts (via N-terminus) with bacterial lipopolysaccharide (LPS).

The protein resides in the secreted. It localises to the lysosome. Its subcellular location is the cytoplasmic granule. Functionally, ribonuclease which shows a preference for the pyrimidines uridine and cytosine. Has potent antibacterial activity against a range of Gram-positive and Gram-negative bacteria, including P.aeruginosa, A.baumanii, M.luteus, S.aureus, E.faecalis, E.faecium, S.saprophyticus and E.coli. Causes loss of bacterial membrane integrity, and also promotes agglutination of Gram-negative bacteria. Probably contributes to urinary tract sterility. Bactericidal activity is independent of RNase activity. This chain is Ribonuclease K6 (RNASE6), found in Saimiri sciureus (Common squirrel monkey).